A 421-amino-acid polypeptide reads, in one-letter code: Exoskeleton protein RP43 (421 aa).

The N-terminal stretch at 1-24 (MRVIFVISLVSFMFVTWQTNPVHC) is a signal peptide. Disulfide bonds link Cys72-Cys104, Cys132-Cys154, Cys193-Cys219, Cys247-Cys269, Cys309-Cys335, and Cys362-Cys384. CUB domains lie at 72–191 (CSKP…YSIV), 193–306 (CNSL…YSVP), and 309–421 (CSVV…YTTG).

As to expression, detected in vestimentum and trunk but not in opisthosome or obturaculum. In the vestimentum, expression is restricted to epithelial cells under apical cuticular plaques.

Its function is as follows. May play a role in protein-protein interactions during tube assembly. The chain is Exoskeleton protein RP43 from Riftia pachyptila (Vent tube worm).